Here is a 595-residue protein sequence, read N- to C-terminus: MSLFKAYARVLTYLKKEKNTSLLICAANVMLAIITIAEPILFGRVIDSIAEKSAIILTLTIWVCFGISHIIAYVLVARSADRLTHRHRLAVLTESFERIIAMPLSWHQQRGTSNALHILLRAIDSMSAIWLDFMRQHLSTLVALFILIPIAFNMNWRLSIVLVVLAIIYVLIARLVMRKTKDGQAAVECYHHNLFQHVSDSISNVSIVQSYNRIREETSALHNYTNDLLKAQNPVLNWWALASGLNRTASTISIVCVLLLGAFFVAKGQLRVGEVVAFVGFAQLMISRLDQMSNFINLTVSSQAKLQEFFSMEDSTFHINEPENLPCLQNVKGTVQFHHVTYKFPNSSQGVFDISFKVKTGQTVAIVGPTGAGKTTLINLLQRVYEPTFGHISIDGINIRSINRESLRKSLATVFQDAGLFNRSIHDNILIGRATATNEELYEAAKIAAAHDFILKKTDRYNTMVGERGSQLSGGEKQRLAIARAVLKNAPILILDEATSALDVETEARVKDALDCISHNRTTFIIAHRLSTVRHADLVLFLENGHLIEKGNFQELIDKGGRFYKLLKAGGLIIDQPTIKGEDKNVIPLREAIAS.

An ABC transmembrane type-1 domain is found at 21 to 301 (SLLICAANVM…MSNFINLTVS (281 aa)). The next 5 membrane-spanning stretches (helical) occupy residues 22 to 42 (LLICAANVMLAIITIAEPILF), 55 to 75 (IILTLTIWVCFGISHIIAYVL), 128 to 148 (AIWLDFMRQHLSTLVALFILI), 152 to 172 (FNMNWRLSIVLVVLAIIYVLI), and 248 to 268 (TASTISIVCVLLLGAFFVAKG). Positions 335-569 (VQFHHVTYKF…GGRFYKLLKA (235 aa)) constitute an ABC transporter domain. 368-375 (GPTGAGKT) serves as a coordination point for ATP.

The protein belongs to the ABC transporter superfamily. Beta-(1--&gt;2)glucan exporter (TC 3.A.1.108.1) family. In terms of assembly, homodimer.

The protein resides in the cell inner membrane. The enzyme catalyses [(1-&gt;2)-beta-D-glucosyl](n)(in) + ATP + H2O = [(1-&gt;2)-beta-D-glucosyl](n)(out) + ADP + phosphate + H(+). Involved in beta-(1--&gt;2)glucan export. Transmembrane domains (TMD) form a pore in the inner membrane and the ATP-binding domain (NBD) is responsible for energy generation. In Bartonella quintana (strain Toulouse) (Rochalimaea quintana), this protein is Beta-(1--&gt;2)glucan export ATP-binding/permease protein NdvA.